The following is a 396-amino-acid chain: MVKETTYYDVLGVKPNATQEELKKAYRKLALKYHPDKNPNEGEKFKQISQAYEVLSDAKKRELYDKGGEQAIKEGGAGGGFGSPMDIFDMFFGGGRMQRERRGKNVVHQLSVTLEDLYNGATRKLALQKNVICDKCEGRGGKKGAVECCPNCRGTGMQIRIHQIGPGMVQQIQSVCMECQGHGERISPKDRCKSCNGRKIVREKKILEVHIDKGMKDGQKITFHGEGDQEPGLEPGDIIIVLDQKDHAVFTRRGEDLFMCMDIQLVEALCGFQKPISTLDNRTIVITSHPGQIVKHGDIKCVLNEGMPIYRRPYEKGRLIIEFKVNFPENGFLSPDKLSLLEKLLPERKEVEETDEMDQVELVDFDPNQERRRHYNGEAYEDDEHHPRGGVQCQTS.

Residues 6–68 form the J domain; sequence TYYDVLGVKP…KKRELYDKGG (63 aa). An N6-acetyllysine modification is found at Lys66. Ser83 bears the Phosphoserine mark. The segment at 120–204 adopts a CR-type zinc-finger fold; that stretch reads GATRKLALQK…CNGRKIVREK (85 aa). Residues Cys133, Cys136, Cys149, Cys152, Cys176, Cys179, Cys192, and Cys195 each contribute to the Zn(2+) site. CXXCXGXG motif repeat units follow at residues 133–140, 149–156, 176–183, and 192–199; these read CDKCEGRG, CPNCRGTG, CMECQGHG, and CKSCNGRK. At Ser334 the chain carries Phosphoserine. The segment at 351 to 396 is disordered; sequence VEETDEMDQVELVDFDPNQERRRHYNGEAYEDDEHHPRGGVQCQTS. Over residues 352–364 the composition is skewed to acidic residues; it reads EETDEMDQVELVD. Tyr380 is modified (phosphotyrosine). A Cysteine methyl ester modification is found at Cys393. Residue Cys393 is the site of S-farnesyl cysteine attachment. Residues 394 to 396 constitute a propeptide, removed in mature form; sequence QTS.

In terms of assembly, identified in a complex with HSPA1B and BAX. Interacts with RNF207.

It is found in the membrane. It localises to the cytoplasm. The protein resides in the microsome. The protein localises to the mitochondrion. Its subcellular location is the nucleus. It is found in the perinuclear region. Functionally, co-chaperone for HSPA8/Hsc70. Plays a role in protein transport into mitochondria via its role as co-chaperone. Functions as co-chaperone for HSPA1B and negatively regulates the translocation of BAX from the cytosol to mitochondria in response to cellular stress, thereby protecting cells against apoptosis. Stimulates ATP hydrolysis, but not the folding of unfolded proteins mediated by HSPA1A (in vitro). Promotes apoptosis in response to cellular stress mediated by exposure to anisomycin or UV. In Pongo abelii (Sumatran orangutan), this protein is DnaJ homolog subfamily A member 1 (DNAJA1).